Consider the following 101-residue polypeptide: Large ribosomal subunit protein bL28 (101 aa).

It belongs to the bacterial ribosomal protein bL28 family.

This Rhodopseudomonas palustris (strain ATCC BAA-98 / CGA009) protein is Large ribosomal subunit protein bL28.